Reading from the N-terminus, the 592-residue chain is Bifunctional purine biosynthesis protein ADE17 (592 aa).

Positions 1–147 constitute an MGS-like domain; it reads MANYTKTAIL…KNHARVTILS (147 aa). Residues 35 to 38, 65 to 68, 102 to 103, and 126 to 127 each bind IMP; these read SGGT, RVKT, CN, and DI. The active-site Proton donor/acceptor; for FAICAR cyclization activity is the Lys138. Residues 206–207, His267, Gly315, Asp338, Asn430, and Arg450 contribute to the 5-amino-1-(5-phospho-beta-D-ribosyl)imidazole-4-carboxamide site; that span reads RY. His267 serves as the catalytic Proton acceptor; for AICAR formyltransferase activity. Ile451 contacts (6R)-10-formyltetrahydrofolate. Phe541 serves as a coordination point for 5-amino-1-(5-phospho-beta-D-ribosyl)imidazole-4-carboxamide. Residues Asp546 and 565-566 contribute to the (6R)-10-formyltetrahydrofolate site; that span reads SV. Arg588 contacts 5-amino-1-(5-phospho-beta-D-ribosyl)imidazole-4-carboxamide.

The protein belongs to the PurH family. In terms of assembly, homodimer.

Its subcellular location is the cytoplasm. It localises to the cytosol. The enzyme catalyses (6R)-10-formyltetrahydrofolate + 5-amino-1-(5-phospho-beta-D-ribosyl)imidazole-4-carboxamide = 5-formamido-1-(5-phospho-D-ribosyl)imidazole-4-carboxamide + (6S)-5,6,7,8-tetrahydrofolate. It carries out the reaction IMP + H2O = 5-formamido-1-(5-phospho-D-ribosyl)imidazole-4-carboxamide. It functions in the pathway purine metabolism; IMP biosynthesis via de novo pathway; 5-formamido-1-(5-phospho-D-ribosyl)imidazole-4-carboxamide from 5-amino-1-(5-phospho-D-ribosyl)imidazole-4-carboxamide (10-formyl THF route): step 1/1. The protein operates within purine metabolism; IMP biosynthesis via de novo pathway; IMP from 5-formamido-1-(5-phospho-D-ribosyl)imidazole-4-carboxamide: step 1/1. Its function is as follows. Bifunctional enzyme that catalyzes the last two steps of purine biosynthesis. Acts as a transformylase that incorporates a formyl group to the AMP analog AICAR (5-amino-1-(5-phospho-beta-D-ribosyl)imidazole-4-carboxamide) to produce the intermediate formyl-AICAR (FAICAR). Also catalyzes the cyclization of FAICAR to IMP. The chain is Bifunctional purine biosynthesis protein ADE17 from Saccharomyces cerevisiae (strain ATCC 204508 / S288c) (Baker's yeast).